The sequence spans 276 residues: Hemin import ATP-binding protein HmuV (276 aa).

Residues 2–259 enclose the ABC transporter domain; sequence LTAHHLDVAR…AHIAQCYGFA (258 aa). 34-41 is a binding site for ATP; the sequence is GRNGAGKS.

Belongs to the ABC transporter superfamily. Heme (hemin) importer (TC 3.A.1.14.5) family. In terms of assembly, the complex is composed of two ATP-binding proteins (HmuV), two transmembrane proteins (HmuU) and a solute-binding protein (HmuT).

The protein localises to the cell inner membrane. Functionally, part of the ABC transporter complex HmuTUV involved in hemin import. Responsible for energy coupling to the transport system. The sequence is that of Hemin import ATP-binding protein HmuV from Burkholderia cenocepacia (strain HI2424).